We begin with the raw amino-acid sequence, 205 residues long: MEATLPVLDAKTAALKRRSIRRYRKDPVPEGLLREILEAALRAPSAWNLQPWRIVVVRDPATKRALREAAFGQAHVEEAPVVLVLYADLEDALAHLDEVIHPGVQGERREAQKQAIQRAFAAMGQEARKAWASGQSYILLGYLLLLLEAYGLGSVPMLGFDPERVRAILGLPSHAAIPALVALGYPAEEGYPSHRLPLERVVLWR.

FMN contacts are provided by residues 17–21 (RRSIR), Gln-73, 158–159 (LG), and Arg-195.

The protein belongs to the nitroreductase family. Homodimer. It depends on FMN as a cofactor.

It catalyses the reaction a ubiquinone + NADH + 5 H(+)(in) = a ubiquinol + NAD(+) + 4 H(+)(out). In terms of biological role, can oxidize either NADH or NADPH with a preference for NADH. Can catalyze electron transfer from NADH to various electron acceptors which include, in addition to molecular oxygen, cytochrome c, 2,6 dichlorphenolindophenol, methylene blue, ferricyanide or P-nitroblue tetrazolium. The sequence is that of NADH dehydrogenase (nox) from Thermus thermophilus (strain ATCC 27634 / DSM 579 / HB8).